The primary structure comprises 308 residues: Olfactory receptor 5H19 (308 aa).

Residues 1–27 are Extracellular-facing; sequence MEKNATLLTEFVLTGLSHQPLWNIPLF. Asn4 carries an N-linked (GlcNAc...) asparagine glycan. The chain crosses the membrane as a helical span at residues 28–48; that stretch reads LVFLVIYLITIVGNVSLITLI. Over 49-55 the chain is Cytoplasmic; it reads WTDPHLH. Residues 56–76 traverse the membrane as a helical segment; it reads IPMYLFLGSLAFVDTSISSIV. Residues 77–92 are Extracellular-facing; that stretch reads VPKMLLNFFGKSKVIT. A helical membrane pass occupies residues 93 to 113; that stretch reads LSECMAQFFLFNISATTECFL. A disulfide bridge links Cys96 with Cys188. Over 114-143 the chain is Cytoplasmic; that stretch reads LAAMAYDRYVAICKPLLYPVVMTNGLCVWL. A helical transmembrane segment spans residues 144 to 164; that stretch reads IALSFVAGIIHALIHEGFLLR. The Extracellular portion of the chain corresponds to 165-197; it reads LTFCNSNMIHNFYCDIISLLKISCTDTSLNYLI. The helical transmembrane segment at 198–218 threads the bilayer; that stretch reads VFIFSGSIQVFTISTILVSYT. The Cytoplasmic portion of the chain corresponds to 219–238; the sequence is IILFTILKKKSAKGIKKAFS. The helical transmembrane segment at 239–259 threads the bilayer; the sequence is TCGAHLLSVSLYYGPLLFMYV. The Extracellular portion of the chain corresponds to 260-270; that stretch reads HPASSEVDDQD. Residues 271-291 form a helical membrane-spanning segment; that stretch reads MIDSLFYTVIIPVLNPIIYSL. The Cytoplasmic portion of the chain corresponds to 292–308; it reads RNKQVIDSLAKFLKRNV.

It belongs to the G-protein coupled receptor 1 family.

It localises to the cell membrane. In terms of biological role, potential odorant receptor. This Mus musculus (Mouse) protein is Olfactory receptor 5H19.